Consider the following 30-residue polypeptide: Scolopendra 20528.11 Da toxin (30 aa).

It belongs to the CRISP family. Venom allergen 5-like subfamily. Post-translationally, contains 3 disulfide bonds. In terms of tissue distribution, expressed by the venom gland.

Its subcellular location is the secreted. The chain is Scolopendra 20528.11 Da toxin from Scolopendra angulata (Barbados giant red centipede).